We begin with the raw amino-acid sequence, 23 residues long: Phospholipase A1 verutoxin-1 (23 aa).

This sequence belongs to the AB hydrolase superfamily. Lipase family. Contains six disulfide bonds. In terms of tissue distribution, expressed by the venom gland.

The protein resides in the secreted. The enzyme catalyses a 1,2-diacyl-sn-glycero-3-phosphocholine + H2O = a 2-acyl-sn-glycero-3-phosphocholine + a fatty acid + H(+). The catalysed reaction is 1-(9Z-octadecenoyl)-2-hexadecanoyl-sn-glycero-3-phosphocholine + H2O = 2-hexadecanoyl-sn-glycero-3-phosphocholine + (9Z)-octadecenoate + H(+). It catalyses the reaction a 1-acyl-sn-glycero-3-phosphocholine + H2O = sn-glycerol 3-phosphocholine + a fatty acid + H(+). It functions in the pathway phospholipid metabolism. Its activity is regulated as follows. Activity is maximal in the presence of calcium. However, unlike phospholipases A2 whose catalytic activity is strictly calcium-dependent, this enzyme shows considerable catalytic activity on phosphatidylcholine emulsified in calcium free solution; the catalytic activity of VT-1 assayed in the absence of calcium ions is 18-20% of that assayed in solution containing calcium ions. Functionally, catalyzes the hydrolysis of glycerophospholipids such as phosphatidylcholine (1,2-diacyl-sn-glycero-3-phosphocholine) and has a moderate activity to hydrolyze lysoglycerophospholipids such as lysophosphatidylcholine (1-acyl-sn-glycero-3-phosphocholine), but is unable to hydrolyze sphingomyelin. Liberates the fatty acid from the sn-1 position of 1,2-diacyl-sn-glycero-3-phosphocholine mainly, indicating phospholipase activity of the A1 type. In addition to acting as an allergen, it possesses a moderate hemolytic activity on red blood cells of mice (3% of hemolysis at 3.0 ug/ml). The protein is Phospholipase A1 verutoxin-1 of Vespa velutina (Asian yellow-legged hornet).